The chain runs to 130 residues: MAKVQYFGTGRRKKSVARVRLVAGDGKVIINNRDIENYFPIETLRVIVNQPLVLTETKDKYDVLVNVHGGGFTGQAGAVRHGISRALVKADENMKSSLKKAGFLTRDPRMKERKKYGLKKARRSPQFSKR.

The disordered stretch occupies residues 102 to 130 (GFLTRDPRMKERKKYGLKKARRSPQFSKR). Over residues 111-130 (KERKKYGLKKARRSPQFSKR) the composition is skewed to basic residues.

It belongs to the universal ribosomal protein uS9 family.

The chain is Small ribosomal subunit protein uS9 from Clostridium botulinum (strain ATCC 19397 / Type A).